The chain runs to 350 residues: Putative [LysW]-lysine/[LysW]-ornithine hydrolase (350 aa).

Residue His-72 participates in Zn(2+) binding. Residue Asp-74 is part of the active site. Asp-96 is a binding site for Zn(2+). Glu-128 serves as the catalytic Proton acceptor. Residues Glu-129, Glu-152, and His-321 each contribute to the Zn(2+) site.

It belongs to the peptidase M20A family. LysK subfamily. Zn(2+) is required as a cofactor. Co(2+) serves as cofactor.

Its subcellular location is the cytoplasm. It catalyses the reaction [amino-group carrier protein]-C-terminal-gamma-(L-lysyl)-L-glutamate + H2O = [amino-group carrier protein]-C-terminal-L-glutamate + L-lysine. The enzyme catalyses [amino-group carrier protein]-C-terminal-gamma-(L-ornithyl)-L-glutamate + H2O = [amino-group carrier protein]-C-terminal-L-glutamate + L-ornithine. It participates in amino-acid biosynthesis; L-lysine biosynthesis via AAA pathway; L-lysine from L-alpha-aminoadipate (Thermus route): step 5/5. Its pathway is amino-acid biosynthesis; L-arginine biosynthesis. Functionally, catalyzes the release of L-lysine from [LysW]-gamma-L-lysine and the release of L-ornithine from [LysW]-L-ornithine. The protein is Putative [LysW]-lysine/[LysW]-ornithine hydrolase of Aeropyrum pernix (strain ATCC 700893 / DSM 11879 / JCM 9820 / NBRC 100138 / K1).